The primary structure comprises 140 residues: MGEPRSQPPVERPPTAETFLPLSRVRTIMKSSMDTGLITNEVLFLMTKCTELFVRHLAGAAYTEEFGQRPGEALKYEHLSQVVNKNKNLEFLLQIVPQKIRVHQFQEMLRLNRSAGSDDDDDDDDDDDEEESESESESDE.

The segment at Leu111–Glu140 is disordered. The segment covering Ser117–Glu140 has biased composition (acidic residues).

Component of the chromatin accessibility complex (CHRAC), composed of Chrac-14, Chrac-16, Acf and Iswi. Forms a heterodimer with Chrac-14. The Chrac-14/Chrac-16 heterodimer interacts with Acf (via N-terminus). Stabilizes the interaction between Chrac-14 and Iswi.

It localises to the nucleus. In terms of biological role, histone-like protein which promotes nucleosome sliding of ATP-dependent nucleosome remodeling complexes. Part of the chromatin-accessibility complex (CHRAC) which uses energy/ATP to increase the general accessibility of DNA in chromatin. As a heterodimer with Chrac-14, binds DNA and facilitates nucleosome sliding by Acf. As part of the CHRAC complex, required for oogenesis. This is Chromatin accessibility complex 16kD protein from Drosophila melanogaster (Fruit fly).